The primary structure comprises 370 residues: Dual-specificity RNA methyltransferase RlmN (370 aa).

Residue E93 is the Proton acceptor of the active site. Residues 99-337 enclose the Radical SAM core domain; sequence EEGRGTLCVS…VTTVRKTRGD (239 aa). C106 and C343 are disulfide-bonded. Residues C113, C117, and C120 each contribute to the [4Fe-4S] cluster site. Residues 167–168, S199, 221–223, and N300 contribute to the S-adenosyl-L-methionine site; these read GE and SLH. Residue C343 is the S-methylcysteine intermediate of the active site.

This sequence belongs to the radical SAM superfamily. RlmN family. Requires [4Fe-4S] cluster as cofactor.

It is found in the cytoplasm. It catalyses the reaction adenosine(2503) in 23S rRNA + 2 reduced [2Fe-2S]-[ferredoxin] + 2 S-adenosyl-L-methionine = 2-methyladenosine(2503) in 23S rRNA + 5'-deoxyadenosine + L-methionine + 2 oxidized [2Fe-2S]-[ferredoxin] + S-adenosyl-L-homocysteine. The enzyme catalyses adenosine(37) in tRNA + 2 reduced [2Fe-2S]-[ferredoxin] + 2 S-adenosyl-L-methionine = 2-methyladenosine(37) in tRNA + 5'-deoxyadenosine + L-methionine + 2 oxidized [2Fe-2S]-[ferredoxin] + S-adenosyl-L-homocysteine. In terms of biological role, specifically methylates position 2 of adenine 2503 in 23S rRNA and position 2 of adenine 37 in tRNAs. m2A2503 modification seems to play a crucial role in the proofreading step occurring at the peptidyl transferase center and thus would serve to optimize ribosomal fidelity. This chain is Dual-specificity RNA methyltransferase RlmN, found in Francisella tularensis subsp. holarctica (strain FTNF002-00 / FTA).